A 256-amino-acid polypeptide reads, in one-letter code: Cell division protein DivIB (256 aa).

The Cytoplasmic portion of the chain corresponds to 1–30 (MNNSKVIKLQDRVPKLKNQKKKNKKNVNHR). The helical transmembrane segment at 31–51 (LILYISILFLLVLFLIYFRSP) threads the bilayer. At 52–256 (LSNIKKISVF…KELGAEEKKE (205 aa)) the chain is on the extracellular side. The 69-residue stretch at 53–121 (SNIKKISVFG…NNIDIHIEEY (69 aa)) folds into the POTRA domain.

It belongs to the FtsQ/DivIB family. DivIB subfamily.

The protein resides in the cell membrane. Functionally, cell division protein that may be involved in stabilizing or promoting the assembly of the division complex. The protein is Cell division protein DivIB of Bacillus cereus (strain ATCC 14579 / DSM 31 / CCUG 7414 / JCM 2152 / NBRC 15305 / NCIMB 9373 / NCTC 2599 / NRRL B-3711).